The sequence spans 212 residues: Ferric nitrobindin-like protein (212 aa).

Residues 1-11 show a composition bias toward basic and acidic residues; sequence MTSSDQPERGS. The interval 1 to 36 is disordered; the sequence is MTSSDQPERGSGDAAVQAAAERAEQTRGRNVPQFDD. A GXWXGXG motif is present at residues 64–70; that stretch reads GVWRGDG.

Belongs to the nitrobindin family.

The chain is Ferric nitrobindin-like protein from Saccharopolyspora erythraea (strain ATCC 11635 / DSM 40517 / JCM 4748 / NBRC 13426 / NCIMB 8594 / NRRL 2338).